The primary structure comprises 207 residues: ATP-dependent Clp protease proteolytic subunit (207 aa).

Serine 111 acts as the Nucleophile in catalysis. Histidine 136 is an active-site residue.

It belongs to the peptidase S14 family. Fourteen ClpP subunits assemble into 2 heptameric rings which stack back to back to give a disk-like structure with a central cavity, resembling the structure of eukaryotic proteasomes.

The protein resides in the cytoplasm. It carries out the reaction Hydrolysis of proteins to small peptides in the presence of ATP and magnesium. alpha-casein is the usual test substrate. In the absence of ATP, only oligopeptides shorter than five residues are hydrolyzed (such as succinyl-Leu-Tyr-|-NHMec, and Leu-Tyr-Leu-|-Tyr-Trp, in which cleavage of the -Tyr-|-Leu- and -Tyr-|-Trp bonds also occurs).. Cleaves peptides in various proteins in a process that requires ATP hydrolysis. Has a chymotrypsin-like activity. Plays a major role in the degradation of misfolded proteins. In Aliivibrio fischeri (strain ATCC 700601 / ES114) (Vibrio fischeri), this protein is ATP-dependent Clp protease proteolytic subunit.